The primary structure comprises 943 residues: uncharacterized protein (943 aa).

M1 bears the N-acetylmethionine mark. Disordered regions lie at residues 37–63 (DETPISRNGNDSNINIQPSSVPQQQQQ), 152–177 (KHQFGKSKKNTKGTGGGGDGDDDDEV), 315–381 (LPMN…QQLQ), 397–472 (QNVP…PLKK), and 515–546 (EREALVEEKEKERAEKNTEANEEEEISHESDD). Residues 41-58 (ISRNGNDSNINIQPSSVP) are compositionally biased toward polar residues. Over residues 152–162 (KHQFGKSKKNT) the composition is skewed to basic residues. Over residues 318 to 358 (NNYNNHPGQFQNTPPVMPSGQQPPQQPRTLSLTNGPRYSPQ) the composition is skewed to polar residues. Residues 367–381 (QQISQRQQQQQQQLQ) show a composition bias toward low complexity. Residues 397-409 (QNVPQGFNPWSPN) show a composition bias toward polar residues. The segment covering 417–433 (SMKQPISQSSISSKNNS) has biased composition (low complexity). The span at 434–470 (AYSIPNVQNNSLTTFSPSSPTDATAMPNSTKQGSSPL) shows a compositional bias: polar residues. The segment covering 515-533 (EREALVEEKEKERAEKNTE) has biased composition (basic and acidic residues). A phosphoserine mark is found at S553, S586, and S619. Residues 616 to 639 (EFPSPGKYNSNSDNGEMNTTNEVD) are disordered. A compositionally biased stretch (polar residues) spans 622-639 (KYNSNSDNGEMNTTNEVD). S649 carries the phosphoserine modification. Residues 654 to 683 (IPERDPKRNVSDATIKRRESDGNGRRLSNV) are disordered. A compositionally biased stretch (basic and acidic residues) spans 655 to 677 (PERDPKRNVSDATIKRRESDGNG). Phosphoserine occurs at positions 681, 766, and 771.

This is an uncharacterized protein from Saccharomyces cerevisiae (strain ATCC 204508 / S288c) (Baker's yeast).